The following is a 155-amino-acid chain: Catabolic 3-dehydroquinase (155 aa).

Y24 functions as the Proton acceptor in the catalytic mechanism. Positions 75, 81, and 88 each coordinate substrate. The active-site Proton donor is H101. Residues 102–103 (VS) and R112 each bind substrate.

The protein belongs to the type-II 3-dehydroquinase family. In terms of assembly, homododecamer. Adopts a ring-like structure, composed of an arrangement of two hexameric rings stacked on top of one another.

The catalysed reaction is 3-dehydroquinate = 3-dehydroshikimate + H2O. It functions in the pathway aromatic compound metabolism; 3,4-dihydroxybenzoate biosynthesis; 3,4-dihydroxybenzoate from 3-dehydroquinate: step 1/2. In terms of biological role, is involved in the catabolism of quinate. Allows the utilization of quinate as carbon source via the beta-ketoadipate pathway. This Penicillium rubens (strain ATCC 28089 / DSM 1075 / NRRL 1951 / Wisconsin 54-1255) (Penicillium chrysogenum) protein is Catabolic 3-dehydroquinase.